The sequence spans 634 residues: Serine/threonine kinase NLK (634 aa).

A Protein kinase domain is found at 240 to 531; the sequence is SQPDRPIGYG…VEEALQHRYL (292 aa). Residues 246 to 254 and lysine 269 contribute to the ATP site; that span reads IGYGAFGVV. The active-site Proton acceptor is the aspartate 366.

The protein belongs to the protein kinase superfamily. CMGC Ser/Thr protein kinase family. MAP kinase subfamily. As to quaternary structure, component of the beta-catenin-lit-1 complex (also called the lit-1/wrm-1 complex or the wrm-1/lit-1 kinase complex) at least composed of lit-1 and wrm-1. Interacts with wrm-1 (via N-terminus); the interaction is direct and activates lit-1 kinase activity which leads to the phosphorylation of pop-1. This promotes pop-1 interaction with par-5 and translocation of pop-1 from the nucleus to the cytoplasm. Interacts with pop-1 (when phosphorylated on 'Ser-118' and 'Ser-127'); the interaction is dependent on the beta-catenin-lit-1 complex. Mg(2+) is required as a cofactor. As to expression, expressed in the pharynx and seam and vulval cells.

It is found in the cytoplasm. The protein localises to the cell cortex. It localises to the nucleus. The catalysed reaction is L-seryl-[protein] + ATP = O-phospho-L-seryl-[protein] + ADP + H(+). The enzyme catalyses L-threonyl-[protein] + ATP = O-phospho-L-threonyl-[protein] + ADP + H(+). Its function is as follows. Has a role in the Wnt signaling pathway controlling the asymmetry of cell divisions during embryogenesis. Operates in the AB and EMS cell lineages influencing cell specification. Required for body wall muscle development, endoderm development, pop-1 asymmetry and T-cell division asymmetry. Component of the beta-catenin-lit-1 complex which promotes the phosphorylation, down-regulation and subcellular relocation of pop-1. Regulates plp-1 nuclear localization in embryos. Plays a role in male tail tip morphogenesis. The sequence is that of Serine/threonine kinase NLK from Caenorhabditis elegans.